The following is a 588-amino-acid chain: Succinate dehydrogenase flavoprotein subunit (588 aa).

Residues 14–19 (GAGGAG), 37–52 (SKVFPTRSHTVSAQGG), and D221 each bind FAD. Residue H45 is modified to Tele-8alpha-FAD histidine. Substrate contacts are provided by H242 and T254. R286 acts as the Proton acceptor in catalysis. H354 contributes to the substrate binding site. E388 is an FAD binding site. Residue R399 participates in substrate binding. An FAD-binding site is contributed by 404–405 (SL).

The protein belongs to the FAD-dependent oxidoreductase 2 family. FRD/SDH subfamily. As to quaternary structure, part of an enzyme complex containing four subunits: a flavoprotein, an iron-sulfur, cytochrome b-556, and a hydrophobic anchor protein. Requires FAD as cofactor.

The protein localises to the cell inner membrane. The enzyme catalyses a quinone + succinate = fumarate + a quinol. It functions in the pathway carbohydrate metabolism; tricarboxylic acid cycle; fumarate from succinate (bacterial route): step 1/1. Two distinct, membrane-bound, FAD-containing enzymes are responsible for the catalysis of fumarate and succinate interconversion; the fumarate reductase is used in anaerobic growth, and the succinate dehydrogenase is used in aerobic growth. The protein is Succinate dehydrogenase flavoprotein subunit (sdhA) of Salmonella typhimurium (strain LT2 / SGSC1412 / ATCC 700720).